A 917-amino-acid polypeptide reads, in one-letter code: Major intrinsically disordered Notch2-binding receptor 1 (917 aa).

Over 1–892 (MEANQEASLF…AEFRRAKVCK (892 aa)) the chain is Cytoplasmic. 7 disordered regions span residues 337 to 367 (STYF…WPAK), 388 to 410 (PSEE…GPDR), 461 to 483 (SCTS…QHVL), 568 to 588 (ITNG…NVHH), 652 to 687 (SEAP…CSDA), 706 to 727 (TRPS…IASI), and 746 to 783 (NEEE…LPKQ). The span at 461 to 480 (SCTSGQHSSDTSSVGTQTEQ) shows a compositional bias: polar residues. Residues 576-588 (KGDKCNRPENVHH) are compositionally biased toward basic and acidic residues. Serine 712 carries the phosphoserine modification. Residues 893-913 (IAALITAAACTVILVIVVPIC) traverse the membrane as a helical segment. At 914-917 (TMKS) the chain is on the extracellular side.

It belongs to the MINAR family. As to quaternary structure, interacts with NOTCH2; this interaction increases MINAR1 stability. Interacts (via N-terminus) with DEPTOR (via PDZ domain); this interaction may stabilize DEPTOR protein by impairing its ubiquitination. In terms of tissue distribution, expressed in brain and in islets of Langerhans.

Its subcellular location is the cell membrane. In terms of biological role, intrinsically disordered protein which may negatively regulate mTOR signaling pathway by stabilizing the mTOR complex component DEPTOR. Negatively regulates angiogenesis. Negatively regulates cell growth. Negatively regulates neurite outgrowth in hippocampal neurons. This is Major intrinsically disordered Notch2-binding receptor 1 (Minar1) from Mus musculus (Mouse).